A 258-amino-acid polypeptide reads, in one-letter code: Shikimate dehydrogenase (NADP(+)) (258 aa).

Residues 14 to 16 and Thr-61 each bind shikimate; that span reads SES. The Proton acceptor role is filled by Lys-65. Residues Asn-86 and Asp-101 each coordinate shikimate. NADP(+)-binding positions include 125–129 and Leu-211; that span reads GSGGS. Tyr-213 contributes to the shikimate binding site. Gly-234 contacts NADP(+).

The protein belongs to the shikimate dehydrogenase family. Homodimer.

The catalysed reaction is shikimate + NADP(+) = 3-dehydroshikimate + NADPH + H(+). It functions in the pathway metabolic intermediate biosynthesis; chorismate biosynthesis; chorismate from D-erythrose 4-phosphate and phosphoenolpyruvate: step 4/7. Functionally, involved in the biosynthesis of the chorismate, which leads to the biosynthesis of aromatic amino acids. Catalyzes the reversible NADPH linked reduction of 3-dehydroshikimate (DHSA) to yield shikimate (SA). This Clostridium botulinum (strain ATCC 19397 / Type A) protein is Shikimate dehydrogenase (NADP(+)).